Consider the following 1140-residue polypeptide: Centrosomal protein of 135 kDa (1140 aa).

Residues 11 to 64 are homodimerization; the sequence is NIRKRLDQLGYRQTLTVECLPLVEKLFSDLVHTTESLRQSKLSAVKAEKESANF. 2 coiled-coil regions span residues 75-151 and 199-416; these read NARL…KNLH and LQVA…FAVT. Ser-383 and Ser-439 each carry phosphoserine. Coiled coils occupy residues 447-644, 668-1036, and 1079-1113; these read LKGI…LENK, SLRI…LESL, and NTML…AIQE. Ser-688 bears the Phosphoserine mark. Residues 1114 to 1140 form a disordered region; the sequence is MRRHGLATPPLSSTLRSPSHSPEHRNV. At Thr-1121 the chain carries Phosphothreonine. The span at 1121-1133 shows a compositional bias: low complexity; that stretch reads TPPLSSTLRSPSH. Ser-1130 is subject to Phosphoserine.

This sequence belongs to the CEP135/TSGA10 family. Homodimer. Interacts with DCTN2. Interacts with CEP250.

It localises to the cytoplasm. The protein localises to the cytoskeleton. Its subcellular location is the microtubule organizing center. The protein resides in the centrosome. It is found in the centriole. In terms of biological role, centrosomal microtubule-binding protein involved in centriole biogenesis. Acts as a scaffolding protein during early centriole biogenesis. Required for the targeting of centriole satellite proteins to centrosomes such as of PCM1, SSX2IP and CEP290 and recruitment of WRAP73 to centrioles. Also required for centriole-centriole cohesion during interphase by acting as a platform protein for CEP250 at the centriole. Required for the recruitment of CEP295 to the proximal end of new-born centrioles at the centriolar microtubule wall during early S phase in a PLK4-dependent manner. This is Centrosomal protein of 135 kDa from Homo sapiens (Human).